Consider the following 288-residue polypeptide: Anthranilate synthase beta subunit 1, chloroplastic (288 aa).

A chloroplast-targeting transit peptide spans 1 to 58 (MACSHLAAAAAAASPAAARSPAASSAATASAFARLSATPRVASGGLAVRGQRGVAAVV). One can recognise a Glutamine amidotransferase type-1 domain in the interval 83-282 (PIIVIDNYDS…VRFIEELEKQ (200 aa)). 134-136 (GPG) lines the L-glutamine pocket. The Nucleophile role is filled by Cys-161. L-glutamine contacts are provided by residues Gln-165 and 215–216 (SL). Active-site residues include His-256 and Glu-258.

In terms of assembly, heterotetramer consisting of two non-identical subunits: a beta subunit and a large alpha subunit. Expressed in roots and leaves.

It is found in the plastid. The protein localises to the chloroplast. The enzyme catalyses chorismate + L-glutamine = anthranilate + pyruvate + L-glutamate + H(+). It participates in amino-acid biosynthesis; L-tryptophan biosynthesis; L-tryptophan from chorismate: step 1/5. Part of a heterotetrameric complex that catalyzes the two-step biosynthesis of anthranilate, an intermediate in the biosynthesis of L-tryptophan. In the first step, the glutamine-binding beta subunit of anthranilate synthase (AS) provides the glutamine amidotransferase activity which generates ammonia as a substrate that, along with chorismate, is used in the second step, catalyzed by the large alpha subunit of AS to produce anthranilate. This is Anthranilate synthase beta subunit 1, chloroplastic from Oryza sativa subsp. japonica (Rice).